We begin with the raw amino-acid sequence, 25 residues long: Caerin-1.5 (25 aa).

Residue Leu-25 is modified to Leucine amide.

Expressed by the skin parotoid and/or rostral glands.

The protein resides in the secreted. Its function is as follows. Antibacterial peptide, that adopts an alpha helical conformation which can disrupt bacterial membranes. Each caerin displays a different antimicrobial specificity. The chain is Caerin-1.5 from Ranoidea caerulea (Green tree frog).